The following is a 144-amino-acid chain: Small ribosomal subunit protein uS19 (144 aa).

This sequence belongs to the universal ribosomal protein uS19 family.

In terms of biological role, protein S19 forms a complex with S13 that binds strongly to the 16S ribosomal RNA. This Aeropyrum pernix (strain ATCC 700893 / DSM 11879 / JCM 9820 / NBRC 100138 / K1) protein is Small ribosomal subunit protein uS19 (rps19).